Consider the following 458-residue polypeptide: Argininosuccinate lyase (458 aa).

It belongs to the lyase 1 family. Argininosuccinate lyase subfamily.

It localises to the cytoplasm. It catalyses the reaction 2-(N(omega)-L-arginino)succinate = fumarate + L-arginine. It functions in the pathway amino-acid biosynthesis; L-arginine biosynthesis; L-arginine from L-ornithine and carbamoyl phosphate: step 3/3. The protein is Argininosuccinate lyase of Salmonella paratyphi A (strain ATCC 9150 / SARB42).